A 607-amino-acid polypeptide reads, in one-letter code: Siderochrome iron transporter 2 (607 aa).

The tract at residues 1-46 (MGLFGSFGARNKATPQVPPGAVAKAPEGTPKGPETNDQPDMDSSRL) is disordered. The next 13 membrane-spanning stretches (helical) occupy residues 86–106 (VWAT…QSGI), 129–149 (ILSS…LNLW), 152–172 (AEGF…LAAC), 180–200 (AGYV…DVFV), 210–230 (AFTF…APLA), 242–262 (WAYG…AVVF), 297–317 (IIGA…FSLA), 326–346 (SAAF…FAAW), 367–387 (LGAC…DLYF), 404–424 (YMTQ…GLWV), 432–452 (HTCL…MIHF), 459–479 (IGYV…LVIG), and 499–519 (FIGL…AAIY). N-linked (GlcNAc...) asparagine glycosylation occurs at Asn538. Residues 573-593 (FGAVAATCILILGIPAIAVWK) form a helical membrane-spanning segment.

It belongs to the major facilitator superfamily.

It is found in the cell membrane. Functionally, major facilitator transporter involved in ferrichrome (FC) uptake. This is Siderochrome iron transporter 2 from Aspergillus fumigatus (strain ATCC MYA-4609 / CBS 101355 / FGSC A1100 / Af293) (Neosartorya fumigata).